Here is a 628-residue protein sequence, read N- to C-terminus: Very-long-chain aldehyde decarbonylase GL1-2 (628 aa).

5 consecutive transmembrane segments (helical) span residues 37–57 (GAAP…ARGL), 131–151 (GWAI…YWAH), 191–211 (VVIG…VGLV), 299–319 (DFVF…PFVL), and 331–351 (FVLL…WCCS). Residues 137-277 (LLHVLVAEPL…MPIFDLLGGT (141 aa)) enclose the Fatty acid hydroxylase domain.

The protein belongs to the sterol desaturase family. As to quaternary structure, homodimer. As to expression, expressed in germinating seeds, radicals and leaves.

The protein localises to the endoplasmic reticulum membrane. The enzyme catalyses a long-chain fatty aldehyde + 2 NADPH + O2 + H(+) = a long-chain alkane + formate + 2 NADP(+) + H2O. Functionally, aldehyde decarbonylase involved in the conversion of aldehydes to alkanes. Core component of a very-long-chain alkane synthesis complex. Required for the formation of wax layers conferring cuticular permeability and drought tolerance. In Oryza sativa subsp. japonica (Rice), this protein is Very-long-chain aldehyde decarbonylase GL1-2.